A 270-amino-acid polypeptide reads, in one-letter code: Putative carbamate hydrolase RutD (270 aa).

It belongs to the AB hydrolase superfamily. Hydrolase RutD family.

It catalyses the reaction carbamate + 2 H(+) = NH4(+) + CO2. In terms of biological role, involved in pyrimidine catabolism. May facilitate the hydrolysis of carbamate, a reaction that can also occur spontaneously. The chain is Putative carbamate hydrolase RutD from Escherichia coli (strain SMS-3-5 / SECEC).